A 344-amino-acid chain; its full sequence is Holliday junction branch migration complex subunit RuvB (344 aa).

The tract at residues 1 to 181 (MERIVTPAEM…FGVLCAMEYY (181 aa)) is large ATPase domain (RuvB-L). ATP-binding positions include Leu20, Arg21, Gly62, Lys65, Thr66, Thr67, 128 to 130 (EDY), Arg171, Tyr181, and Arg218. Position 66 (Thr66) interacts with Mg(2+). Residues 182–252 (DETQLKEIVI…EARDALELLE (71 aa)) are small ATPAse domain (RuvB-S). The tract at residues 255-344 (NQGFDKVDNK…SNKGQTSFFK (90 aa)) is head domain (RuvB-H). 2 residues coordinate DNA: Arg310 and Arg315.

Belongs to the RuvB family. As to quaternary structure, homohexamer. Forms an RuvA(8)-RuvB(12)-Holliday junction (HJ) complex. HJ DNA is sandwiched between 2 RuvA tetramers; dsDNA enters through RuvA and exits via RuvB. An RuvB hexamer assembles on each DNA strand where it exits the tetramer. Each RuvB hexamer is contacted by two RuvA subunits (via domain III) on 2 adjacent RuvB subunits; this complex drives branch migration. In the full resolvosome a probable DNA-RuvA(4)-RuvB(12)-RuvC(2) complex forms which resolves the HJ.

The protein resides in the cytoplasm. It catalyses the reaction ATP + H2O = ADP + phosphate + H(+). Its function is as follows. The RuvA-RuvB-RuvC complex processes Holliday junction (HJ) DNA during genetic recombination and DNA repair, while the RuvA-RuvB complex plays an important role in the rescue of blocked DNA replication forks via replication fork reversal (RFR). RuvA specifically binds to HJ cruciform DNA, conferring on it an open structure. The RuvB hexamer acts as an ATP-dependent pump, pulling dsDNA into and through the RuvAB complex. RuvB forms 2 homohexamers on either side of HJ DNA bound by 1 or 2 RuvA tetramers; 4 subunits per hexamer contact DNA at a time. Coordinated motions by a converter formed by DNA-disengaged RuvB subunits stimulates ATP hydrolysis and nucleotide exchange. Immobilization of the converter enables RuvB to convert the ATP-contained energy into a lever motion, pulling 2 nucleotides of DNA out of the RuvA tetramer per ATP hydrolyzed, thus driving DNA branch migration. The RuvB motors rotate together with the DNA substrate, which together with the progressing nucleotide cycle form the mechanistic basis for DNA recombination by continuous HJ branch migration. Branch migration allows RuvC to scan DNA until it finds its consensus sequence, where it cleaves and resolves cruciform DNA. The polypeptide is Holliday junction branch migration complex subunit RuvB (Clostridium botulinum (strain Eklund 17B / Type B)).